Reading from the N-terminus, the 487-residue chain is Glutamate--tRNA ligase (487 aa).

Positions 13 to 23 match the 'HIGH' region motif; sequence PSPTGLFHIGG. The 'KMSKS' region signature appears at 255 to 259; that stretch reads KLSKR. Lys-258 provides a ligand contact to ATP.

The protein belongs to the class-I aminoacyl-tRNA synthetase family. Glutamate--tRNA ligase type 1 subfamily. In terms of assembly, monomer.

Its subcellular location is the cytoplasm. It catalyses the reaction tRNA(Glu) + L-glutamate + ATP = L-glutamyl-tRNA(Glu) + AMP + diphosphate. Functionally, catalyzes the attachment of glutamate to tRNA(Glu) in a two-step reaction: glutamate is first activated by ATP to form Glu-AMP and then transferred to the acceptor end of tRNA(Glu). The sequence is that of Glutamate--tRNA ligase from Malacoplasma penetrans (strain HF-2) (Mycoplasma penetrans).